The sequence spans 334 residues: Malate dehydrogenase (334 aa).

17-23 contacts NAD(+); sequence GAAGQIG. Arg98 and Arg104 together coordinate substrate. Residues Asn111, Gln118, and 135–137 contribute to the NAD(+) site; that span reads VGN. The substrate site is built by Asn137 and Arg168. His193 functions as the Proton acceptor in the catalytic mechanism.

Belongs to the LDH/MDH superfamily. MDH type 2 family.

It catalyses the reaction (S)-malate + NAD(+) = oxaloacetate + NADH + H(+). Catalyzes the reversible oxidation of malate to oxaloacetate. The polypeptide is Malate dehydrogenase (Deinococcus geothermalis (strain DSM 11300 / CIP 105573 / AG-3a)).